Here is a 174-residue protein sequence, read N- to C-terminus: Ribosome maturation factor RimM (174 aa).

Positions 96 to 169 (EPDTYYDHQL…ILEIDPPDGL (74 aa)) constitute a PRC barrel domain.

This sequence belongs to the RimM family. Binds ribosomal protein uS19.

It localises to the cytoplasm. Its function is as follows. An accessory protein needed during the final step in the assembly of 30S ribosomal subunit, possibly for assembly of the head region. Essential for efficient processing of 16S rRNA. May be needed both before and after RbfA during the maturation of 16S rRNA. It has affinity for free ribosomal 30S subunits but not for 70S ribosomes. This chain is Ribosome maturation factor RimM, found in Mycobacterium marinum (strain ATCC BAA-535 / M).